A 647-amino-acid chain; its full sequence is DNA mismatch repair protein MutL (647 aa).

This sequence belongs to the DNA mismatch repair MutL/HexB family.

In terms of biological role, this protein is involved in the repair of mismatches in DNA. It is required for dam-dependent methyl-directed DNA mismatch repair. May act as a 'molecular matchmaker', a protein that promotes the formation of a stable complex between two or more DNA-binding proteins in an ATP-dependent manner without itself being part of a final effector complex. The polypeptide is DNA mismatch repair protein MutL (Bacillus cereus (strain Q1)).